Here is a 246-residue protein sequence, read N- to C-terminus: MAAPGPALCLFDVDGTLTAPRQKITKEMDDFLQKLRQKIKIGVVGGSDFEKVQEQLGNDVVEKYDYVFPENGLVAYKDGKLLCRQNIQSHLGEALIQDLINYCLSYIAKIKLPKKRGTFIEFRNGMLNVSPIGRSCSQEERIEFYELDKKENIRQKFVADLRKEFAGKGLTFSIGGQISFDVFPDGWDKRYCLRHVENDGYKTIYFFGDKTMPGGNDHEIFTDPRTMGYSVTAPEDTRRICELLFS.

The residue at position 2 (Ala2) is an N-acetylalanine. Asp12 (nucleophile) is an active-site residue. Mg(2+)-binding residues include Asp12 and Asp14. Asp14 serves as the catalytic Proton donor/acceptor. The alpha-D-mannose 1-phosphate site is built by Arg21, Arg123, Arg134, and Arg141. Lys149 bears the N6-acetyllysine mark. Alpha-D-mannose 1-phosphate contacts are provided by Ser179 and Asp181. Residues Asp209, Phe221, Asp223, and Thr226 each contribute to the Mg(2+) site.

Belongs to the eukaryotic PMM family. As to quaternary structure, homodimer.

It localises to the cytoplasm. The catalysed reaction is alpha-D-mannose 1-phosphate = D-mannose 6-phosphate. It functions in the pathway nucleotide-sugar biosynthesis; GDP-alpha-D-mannose biosynthesis; alpha-D-mannose 1-phosphate from D-fructose 6-phosphate: step 2/2. Its function is as follows. Involved in the synthesis of the GDP-mannose and dolichol-phosphate-mannose required for a number of critical mannosyl transfer reactions. The chain is Phosphomannomutase 2 (PMM2) from Homo sapiens (Human).